Consider the following 133-residue polypeptide: Small ribosomal subunit protein bS16 (133 aa).

The segment at 99–133 is disordered; that stretch reads EKWQQNQTERRQKRLAVKTRRRQAKKAAEAKGAEA. Over residues 109 to 123 the composition is skewed to basic residues; it reads RQKRLAVKTRRRQAK. Positions 124–133 are enriched in basic and acidic residues; that stretch reads KAAEAKGAEA.

It belongs to the bacterial ribosomal protein bS16 family.

The polypeptide is Small ribosomal subunit protein bS16 (Chlorobium limicola (strain DSM 245 / NBRC 103803 / 6330)).